Reading from the N-terminus, the 1171-residue chain is DNA-directed RNA polymerase subunit beta (1171 aa).

It belongs to the RNA polymerase beta chain family. As to quaternary structure, the RNAP catalytic core consists of 2 alpha, 1 beta, 1 beta' and 1 omega subunit. When a sigma factor is associated with the core the holoenzyme is formed, which can initiate transcription.

It catalyses the reaction RNA(n) + a ribonucleoside 5'-triphosphate = RNA(n+1) + diphosphate. In terms of biological role, DNA-dependent RNA polymerase catalyzes the transcription of DNA into RNA using the four ribonucleoside triphosphates as substrates. The protein is DNA-directed RNA polymerase subunit beta of Kineococcus radiotolerans (strain ATCC BAA-149 / DSM 14245 / SRS30216).